Consider the following 546-residue polypeptide: CTP synthase (546 aa).

Positions methionine 1–isoleucine 266 are amidoligase domain. CTP is bound at residue serine 14. Serine 14 is a binding site for UTP. Residues serine 15–isoleucine 20 and aspartate 72 each bind ATP. The Mg(2+) site is built by aspartate 72 and glutamate 140. CTP is bound by residues aspartate 147–glutamate 149, lysine 187–glutamine 192, and lysine 223. UTP-binding positions include lysine 187 to glutamine 192 and lysine 223. An ATP-binding site is contributed by arginine 239 to valine 241. The 252-residue stretch at threonine 291–glycine 542 folds into the Glutamine amidotransferase type-1 domain. Glycine 352 lines the L-glutamine pocket. Cysteine 379 functions as the Nucleophile; for glutamine hydrolysis in the catalytic mechanism. L-glutamine contacts are provided by residues leucine 380–glutamine 383, glutamate 403, and arginine 470. Catalysis depends on residues histidine 515 and glutamate 517.

It belongs to the CTP synthase family. Homotetramer.

The catalysed reaction is UTP + L-glutamine + ATP + H2O = CTP + L-glutamate + ADP + phosphate + 2 H(+). The enzyme catalyses L-glutamine + H2O = L-glutamate + NH4(+). It catalyses the reaction UTP + NH4(+) + ATP = CTP + ADP + phosphate + 2 H(+). Its pathway is pyrimidine metabolism; CTP biosynthesis via de novo pathway; CTP from UDP: step 2/2. Allosterically activated by GTP, when glutamine is the substrate; GTP has no effect on the reaction when ammonia is the substrate. The allosteric effector GTP functions by stabilizing the protein conformation that binds the tetrahedral intermediate(s) formed during glutamine hydrolysis. Inhibited by the product CTP, via allosteric rather than competitive inhibition. Its function is as follows. Catalyzes the ATP-dependent amination of UTP to CTP with either L-glutamine or ammonia as the source of nitrogen. Regulates intracellular CTP levels through interactions with the four ribonucleotide triphosphates. This is CTP synthase from Vibrio atlanticus (strain LGP32) (Vibrio splendidus (strain Mel32)).